The following is a 391-amino-acid chain: Succinate--CoA ligase [ADP-forming] subunit beta (391 aa).

Residues 9-246 (KHLFTEAGIA…LTQEDETEVR (238 aa)) enclose the ATP-grasp domain. Residues lysine 46, 53-55 (GRG), glutamate 99, leucine 102, and glutamate 107 each bind ATP. Asparagine 199 and aspartate 213 together coordinate Mg(2+). Residues asparagine 266 and 323-325 (GIV) each bind substrate.

This sequence belongs to the succinate/malate CoA ligase beta subunit family. In terms of assembly, heterotetramer of two alpha and two beta subunits. Mg(2+) is required as a cofactor.

The enzyme catalyses succinate + ATP + CoA = succinyl-CoA + ADP + phosphate. The catalysed reaction is GTP + succinate + CoA = succinyl-CoA + GDP + phosphate. The protein operates within carbohydrate metabolism; tricarboxylic acid cycle; succinate from succinyl-CoA (ligase route): step 1/1. Functionally, succinyl-CoA synthetase functions in the citric acid cycle (TCA), coupling the hydrolysis of succinyl-CoA to the synthesis of either ATP or GTP and thus represents the only step of substrate-level phosphorylation in the TCA. The beta subunit provides nucleotide specificity of the enzyme and binds the substrate succinate, while the binding sites for coenzyme A and phosphate are found in the alpha subunit. In Halorhodospira halophila (strain DSM 244 / SL1) (Ectothiorhodospira halophila (strain DSM 244 / SL1)), this protein is Succinate--CoA ligase [ADP-forming] subunit beta.